A 1371-amino-acid polypeptide reads, in one-letter code: DNA-directed RNA polymerase subunit beta (1371 aa).

It belongs to the RNA polymerase beta chain family. As to quaternary structure, the RNAP catalytic core consists of 2 alpha, 1 beta, 1 beta' and 1 omega subunit. When a sigma factor is associated with the core the holoenzyme is formed, which can initiate transcription.

It catalyses the reaction RNA(n) + a ribonucleoside 5'-triphosphate = RNA(n+1) + diphosphate. DNA-dependent RNA polymerase catalyzes the transcription of DNA into RNA using the four ribonucleoside triphosphates as substrates. The sequence is that of DNA-directed RNA polymerase subunit beta from Citrifermentans bemidjiense (strain ATCC BAA-1014 / DSM 16622 / JCM 12645 / Bem) (Geobacter bemidjiensis).